The primary structure comprises 248 residues: 2,3-bisphosphoglycerate-dependent phosphoglycerate mutase (248 aa).

Residues 8–15 (RHGESEWN), 21–22 (TG), R60, 87–90 (ERHY), K98, 114–115 (RR), and 183–184 (GN) contribute to the substrate site. H9 (tele-phosphohistidine intermediate) is an active-site residue. The active-site Proton donor/acceptor is the E87.

It belongs to the phosphoglycerate mutase family. BPG-dependent PGAM subfamily.

It catalyses the reaction (2R)-2-phosphoglycerate = (2R)-3-phosphoglycerate. Its pathway is carbohydrate degradation; glycolysis; pyruvate from D-glyceraldehyde 3-phosphate: step 3/5. In terms of biological role, catalyzes the interconversion of 2-phosphoglycerate and 3-phosphoglycerate. The protein is 2,3-bisphosphoglycerate-dependent phosphoglycerate mutase of Borrelia garinii subsp. bavariensis (strain ATCC BAA-2496 / DSM 23469 / PBi) (Borreliella bavariensis).